A 599-amino-acid polypeptide reads, in one-letter code: Calmodulin-binding protein 60 E (599 aa).

Residues 1–21 form a disordered region; sequence MNKRGYECSQEDTDKLPESKR. The tract at residues 1–80 is calmodulin-binding; that stretch reads MNKRGYECSQ…LTSRSPEPKR (80 aa). Residues 150 to 273 are DNA-binding; the sequence is EDDEDWTREH…VLHKKLLKAN (124 aa).

Belongs to the plant ACBP60 protein family. In terms of assembly, interacts with calmodulin (CaM).

The protein resides in the nucleus. Functionally, transcription activator that binds DNA in a sequence-specific manner, likely 5'-GAAATTTTGG-3', to promote the expression of target genes. In Arabidopsis thaliana (Mouse-ear cress), this protein is Calmodulin-binding protein 60 E.